The primary structure comprises 499 residues: Probable cytosol aminopeptidase (499 aa).

Mn(2+) contacts are provided by Lys-269 and Asp-274. Lys-281 is an active-site residue. Mn(2+)-binding residues include Asp-292, Asp-351, and Glu-353. The active site involves Arg-355.

It belongs to the peptidase M17 family. Mn(2+) serves as cofactor.

The protein localises to the cytoplasm. It carries out the reaction Release of an N-terminal amino acid, Xaa-|-Yaa-, in which Xaa is preferably Leu, but may be other amino acids including Pro although not Arg or Lys, and Yaa may be Pro. Amino acid amides and methyl esters are also readily hydrolyzed, but rates on arylamides are exceedingly low.. The enzyme catalyses Release of an N-terminal amino acid, preferentially leucine, but not glutamic or aspartic acids.. In terms of biological role, presumably involved in the processing and regular turnover of intracellular proteins. Catalyzes the removal of unsubstituted N-terminal amino acids from various peptides. The polypeptide is Probable cytosol aminopeptidase (Actinobacillus pleuropneumoniae serotype 7 (strain AP76)).